The following is an 81-amino-acid chain: Translational regulator CsrA (81 aa).

This sequence belongs to the CsrA/RsmA family. As to quaternary structure, homodimer; the beta-strands of each monomer intercalate to form a hydrophobic core, while the alpha-helices form wings that extend away from the core.

The protein localises to the cytoplasm. In terms of biological role, a translational regulator that binds mRNA to regulate translation initiation and/or mRNA stability. Usually binds in the 5'-UTR at or near the Shine-Dalgarno sequence preventing ribosome-binding, thus repressing translation. Its main target seems to be the major flagellin gene, while its function is anatagonized by FliW. The sequence is that of Translational regulator CsrA from Borreliella burgdorferi (strain ATCC 35210 / DSM 4680 / CIP 102532 / B31) (Borrelia burgdorferi).